We begin with the raw amino-acid sequence, 257 residues long: Pyridoxine 5'-phosphate synthase (257 aa).

Residue asparagine 6 participates in 3-amino-2-oxopropyl phosphate binding. 8 to 9 (DH) is a 1-deoxy-D-xylulose 5-phosphate binding site. Arginine 17 serves as a coordination point for 3-amino-2-oxopropyl phosphate. The active-site Proton acceptor is histidine 42. 1-deoxy-D-xylulose 5-phosphate is bound by residues arginine 44 and histidine 49. The active-site Proton acceptor is the glutamate 69. A 1-deoxy-D-xylulose 5-phosphate-binding site is contributed by threonine 99. Catalysis depends on histidine 211, which acts as the Proton donor. Residues glycine 212 and 233–234 (GQ) contribute to the 3-amino-2-oxopropyl phosphate site.

Belongs to the PNP synthase family. Homooctamer; tetramer of dimers.

The protein resides in the cytoplasm. The catalysed reaction is 3-amino-2-oxopropyl phosphate + 1-deoxy-D-xylulose 5-phosphate = pyridoxine 5'-phosphate + phosphate + 2 H2O + H(+). It participates in cofactor biosynthesis; pyridoxine 5'-phosphate biosynthesis; pyridoxine 5'-phosphate from D-erythrose 4-phosphate: step 5/5. Its function is as follows. Catalyzes the complicated ring closure reaction between the two acyclic compounds 1-deoxy-D-xylulose-5-phosphate (DXP) and 3-amino-2-oxopropyl phosphate (1-amino-acetone-3-phosphate or AAP) to form pyridoxine 5'-phosphate (PNP) and inorganic phosphate. This chain is Pyridoxine 5'-phosphate synthase, found in Campylobacter hominis (strain ATCC BAA-381 / DSM 21671 / CCUG 45161 / LMG 19568 / NCTC 13146 / CH001A).